The primary structure comprises 419 residues: Synaptosomal-associated protein 47 (419 aa).

2 consecutive t-SNARE coiled-coil homology domains span residues 108-170 (PQGA…LSEL) and 356-418 (VLQP…MRKL).

This sequence belongs to the SVAP1 family.

May play a role in intracellular membrane fusion. This is Synaptosomal-associated protein 47 (snap47) from Danio rerio (Zebrafish).